Reading from the N-terminus, the 258-residue chain is MILDKIIAQTKKDLDNRKNSNDFNKFLAQKRDFRDVKKALKATPDNPYRIIAEVKKASPSKGIIKEDFNPVEIAKEYIEVADAMSILTEPHFFQGSLEYLKEINKFSPIPLLRKDFIIDEFQIAEAYAAGADFILLIAKALDVSTLKRLYDFAKNTGLEVLFEIHDEEDLQKGLEVGADIIGFNHRNLETFEMDMDLSKKLIPKLPKNVIVVAESGINDFETVKKLSRNGVDAYLVGEHFMRQDNIKKAVLTLKGKTE.

This sequence belongs to the TrpC family.

It catalyses the reaction 1-(2-carboxyphenylamino)-1-deoxy-D-ribulose 5-phosphate + H(+) = (1S,2R)-1-C-(indol-3-yl)glycerol 3-phosphate + CO2 + H2O. Its pathway is amino-acid biosynthesis; L-tryptophan biosynthesis; L-tryptophan from chorismate: step 4/5. This Nautilia profundicola (strain ATCC BAA-1463 / DSM 18972 / AmH) protein is Indole-3-glycerol phosphate synthase.